The sequence spans 493 residues: MIPVVALVGRPNVGKSTLFNRLTRTRDALVADFPGLTRDRKYGRAEVEGQEFIIIDTGGIDGTEDGVETHMAAQSLLAIEEADIVLFMVDARAGLMPADHAIAKHLRGREKATFLVANKTDGVDIDTAIAEFYSLGLGDIYSIAASHGRGVTQLIERVLLPFSGKGEEEVVELTEEEANAAYWAEQEQNEIEMVEEEEDFDPSTLPLKLAIVGKPNVGKSTLTNRILGEERVVVYDMPGTTRDSIYIPMERDGREYILIDTAGVRKRGKITETVEKFSVIKTLQAIEDANVVLLVIDAREGISDQDLSLLGFILNSGRSLVIAVNKWDGMSQEDKERVKEMLDYRLGFVDFARVHFISALHGSGVGNLFDSILEAYDCATRRVNTSLLTRIMHMAEEDHQPPMIRGRRVKMKYAHAGGYNPPIVVIHGNQVTDLPDSYKRYLMNYFRRSLKVMGTPIRIQFKEGANPYADKRNTLTPNQMRKRKRLMAHLKKR.

EngA-type G domains are found at residues 3–166 and 207–380; these read PVVA…SGKG and LKLA…DCAT. Residues 9-16, 56-60, 118-121, 213-220, 260-264, and 325-328 each bind GTP; these read GRPNVGKS, DTGGI, NKTD, GKPNVGKS, DTAGV, and NKWD. The KH-like domain occupies 381-465; that stretch reads RRVNTSLLTR…PIRIQFKEGA (85 aa).

The protein belongs to the TRAFAC class TrmE-Era-EngA-EngB-Septin-like GTPase superfamily. EngA (Der) GTPase family. In terms of assembly, associates with the 50S ribosomal subunit.

Functionally, GTPase that plays an essential role in the late steps of ribosome biogenesis. The protein is GTPase Der of Photorhabdus laumondii subsp. laumondii (strain DSM 15139 / CIP 105565 / TT01) (Photorhabdus luminescens subsp. laumondii).